Here is a 112-residue protein sequence, read N- to C-terminus: MSSVKFLQNLKRINEEDLRNLMEKGETFVLYVRSERLYDKVKEIFDVDVVFPELAKSFEGIPFYWGDADELKELNVIPPSVLIFKEGKPVEFLQGIKTWAEYTRKLKESLLC.

This is an uncharacterized protein from Aquifex aeolicus (strain VF5).